A 147-amino-acid chain; its full sequence is D-aminoacyl-tRNA deacylase (147 aa).

A Gly-cisPro motif, important for rejection of L-amino acids motif is present at residues 137–138 (GP).

The protein belongs to the DTD family. Homodimer.

The protein localises to the cytoplasm. The enzyme catalyses glycyl-tRNA(Ala) + H2O = tRNA(Ala) + glycine + H(+). The catalysed reaction is a D-aminoacyl-tRNA + H2O = a tRNA + a D-alpha-amino acid + H(+). Its function is as follows. An aminoacyl-tRNA editing enzyme that deacylates mischarged D-aminoacyl-tRNAs. Also deacylates mischarged glycyl-tRNA(Ala), protecting cells against glycine mischarging by AlaRS. Acts via tRNA-based rather than protein-based catalysis; rejects L-amino acids rather than detecting D-amino acids in the active site. By recycling D-aminoacyl-tRNA to D-amino acids and free tRNA molecules, this enzyme counteracts the toxicity associated with the formation of D-aminoacyl-tRNA entities in vivo and helps enforce protein L-homochirality. This Jannaschia sp. (strain CCS1) protein is D-aminoacyl-tRNA deacylase.